The chain runs to 115 residues: Putative membrane protein insertion efficiency factor (115 aa).

Belongs to the UPF0161 family.

The protein localises to the cell membrane. Could be involved in insertion of integral membrane proteins into the membrane. The chain is Putative membrane protein insertion efficiency factor from Mycobacterium avium (strain 104).